Reading from the N-terminus, the 593-residue chain is Lipolysis-stimulated lipoprotein receptor (593 aa).

The signal sequence occupies residues Met1–Ser35. Residues Ala36–Asp206 are Extracellular-facing. In terms of domain architecture, Ig-like V-type spans Pro89–Ala181. An intrachain disulfide couples Cys113 to Cys165. A helical membrane pass occupies residues Trp207–Cys227. The Cytoplasmic portion of the chain corresponds to Trp228–Val593. Phosphothreonine is present on Thr283. Residues Ser308, Ser314, Ser332, Ser375, and Ser379 each carry the phosphoserine modification. The span at Ser375 to Ser387 shows a compositional bias: basic and acidic residues. Positions Ser375 to Arg578 are disordered. Thr396 is subject to Phosphothreonine. Ser407, Ser410, and Ser436 each carry phosphoserine. Residues Arg435–Asn444 show a composition bias toward basic and acidic residues. The span at Arg445–Gly460 shows a compositional bias: low complexity. Ser471 and Ser473 each carry phosphoserine. Basic and acidic residues predominate over residues Arg472 to Arg550. At Tyr478 the chain carries Phosphotyrosine. Ser575 bears the Phosphoserine mark. A Glycyl lysine isopeptide (Lys-Gly) (interchain with G-Cter in ubiquitin) cross-link involves residue Lys582. Residues Ser587 and Ser590 each carry the phosphoserine modification.

It belongs to the immunoglobulin superfamily. LISCH7 family. Homotrimer or homotetramer constituted of isoform 1 and/or isoform 2 and isoform 3. Assembles into cell-cell contacts. Interacts (via the cytoplasmic domain) with MARVELD2 (via C-terminal cytoplasmic domain); the interaction is required to recruit MARVELD2 to tricellular contacts. Interacts with OCLN. In terms of processing, phosphorylation at Ser-308 by MAPK8/JNK1 and MAPK9/JNK2 may be required for exclusive localization at tricellular tight junstions. Polyubiquitinated at Lys-582 via 'Lys-63'-linked ubiquitin chains; deubiquitinated by USP53. Specifically expressed in liver. Also detected in kidney and lung.

Its subcellular location is the cell membrane. The protein resides in the cell junction. It localises to the tight junction. Probable role in the clearance of triglyceride-rich lipoprotein from blood. Binds chylomicrons, LDL and VLDL in presence of free fatty acids and allows their subsequent uptake in the cells. Maintains epithelial barrier function by recruiting MARVELD2/tricellulin to tricellular tight junctions. The sequence is that of Lipolysis-stimulated lipoprotein receptor from Rattus norvegicus (Rat).